A 432-amino-acid chain; its full sequence is Polyadenylate-binding protein RBP47C (432 aa).

The disordered stretch occupies residues 1 to 55; it reads MADVKIQSESESSDSHPVVDNQPPPPPPPPQQPAKEEENQPKTSPTPPPHWMRYP. The segment covering 22–32 has biased composition (pro residues); sequence QPPPPPPPPQQ. RRM domains lie at 101–183 and 197–276; these read KTIW…WASF and LSIF…PATP. Positions 271-293 are disordered; that stretch reads IGPATPRKTNGYQQQGGYMPNGT. A compositionally biased stretch (polar residues) spans 277-286; the sequence is RKTNGYQQQG. An RRM 3 domain is found at 304 to 376; it reads TTIFVGGLDS…QTVRLSWGRN (73 aa).

It belongs to the polyadenylate-binding RBP47 family. In terms of assembly, interacts with the poly(A) tail of mRNA in nucleus. In terms of tissue distribution, expressed in leaves, stems, flowers, and seedlings.

It localises to the nucleus. Its subcellular location is the cytoplasmic granule. Its function is as follows. Heterogeneous nuclear ribonucleoprotein (hnRNP)-protein binding the poly(A) tail of mRNA and probably involved in some steps of pre-mRNA maturation. This Arabidopsis thaliana (Mouse-ear cress) protein is Polyadenylate-binding protein RBP47C (RBP47C).